A 160-amino-acid polypeptide reads, in one-letter code: Major strawberry allergen Fra a 1.05 (160 aa).

This sequence belongs to the BetVI family. Post-translationally, phosphorylated in vivo. Phosphorylation prevents its activity as ribonuclease.

Its function is as follows. Possesses ribonuclease activity in vitro. The sequence is that of Major strawberry allergen Fra a 1.05 from Fragaria ananassa (Strawberry).